A 1495-amino-acid chain; its full sequence is Terminal uridylyltransferase 7 (1495 aa).

Disordered stretches follow at residues 1–30 (MGDT…GHPQ), 43–69 (HGSK…RKGP), 89–140 (WMND…EDGY), and 162–205 (LETT…PVID). Basic and acidic residues predominate over residues 15-26 (DRGTMDDDDFRR). Phosphothreonine is present on residues Thr57 and Thr64. Composition is skewed to basic and acidic residues over residues 92–118 (DSHK…EFKP) and 128–140 (QRKD…EDGY). Ser132 and Ser172 each carry phosphoserine. Residues 178-187 (QRSRPRKPRK) show a composition bias toward basic residues. The Matrin-type zinc finger occupies 244–274 (YTCRLCDVLIESIAFAHKHIKEKRHKKNIKE). One can recognise a PAP-associated 1 domain in the interval 551–600 (VGQLWVELLRFYALEFNLADLVISIRVKELVSRELKDWPKKRIAIEDPYS). Ser600 bears the Phosphoserine mark. Residues 734–756 (DDYKGDKVYHPETGRKNEKEKVG) show a composition bias toward basic and acidic residues. 2 disordered regions span residues 734–757 (DDYK…KVGR) and 831–898 (THSV…EDDE). The segment covering 831 to 841 (THSVQGQTSEM) has biased composition (polar residues). Acidic residues-rich tracts occupy residues 843–859 (PSDE…EEEE), 868–880 (EDED…DELD), and 887–898 (GDEDALSEEDDE). At Ser844 the chain carries Phosphoserine. Ser893 and Ser939 each carry phosphoserine. The interval 951–1495 (SKLIFTKGKS…ASAKRTQQES (545 aa)) is sufficient for monouridylation activity. The CCHC-type 1 zinc-finger motif lies at 963–980 (VVCSLCKREGHLKKDCPE). Residues 1047 to 1050 (SSKN), 1057 to 1060 (SDLD), Asn1130, Lys1152, 1170 to 1174 (SYAYT), and His1286 each bind UTP. Mg(2+)-binding residues include Asp1058 and Asp1060. Residues 1233-1286 (SVGQLWLGLLRFYTEEFDFKEHVISIRRKSLLTTFKKQWTSKYIVIEDPFDLNH) form the PAP-associated 2 domain. The CCHC-type 2 zinc finger occupies 1345–1362 (RCCRICGKIGHFMKDCPM). 2 disordered regions span residues 1367–1424 (RRRR…MRAA) and 1466–1495 (CPQF…QQES). A compositionally biased stretch (basic and acidic residues) spans 1381-1410 (PENKEKRSKEDKEIHNKYTEREVSTKEDKP). The CCHC-type 3 zinc-finger motif lies at 1451-1468 (KRCFICGREGHIKKECPQ). A compositionally biased stretch (polar residues) spans 1470 to 1485 (KGSSGSLSSKYMTQGK).

This sequence belongs to the DNA polymerase type-B-like family. As to quaternary structure, interacts with MOV10; the interaction is RNA-dependent. The cofactor is Mg(2+). Mn(2+) serves as cofactor.

It localises to the cytoplasm. It carries out the reaction RNA(n) + UTP = RNA(n)-3'-uridine ribonucleotide + diphosphate. Uridylyltransferase that mediates the terminal uridylation of mRNAs with short (less than 25 nucleotides) poly(A) tails, hence facilitating global mRNA decay. Essential for both oocyte maturation and fertility. Through 3' terminal uridylation of mRNA, sculpts, with TUT7, the maternal transcriptome by eliminating transcripts during oocyte growth. Involved in microRNA (miRNA)-induced gene silencing through uridylation of deadenylated miRNA targets. Also functions as an integral regulator of microRNA biogenesiS using 3 different uridylation mechanisms. Acts as a suppressor of miRNA biogenesis by mediating the terminal uridylation of some miRNA precursors, including that of let-7 (pre-let-7). Uridylated pre-let-7 RNA is not processed by Dicer and undergo degradation. Pre-let-7 uridylation is strongly enhanced in the presence of LIN28A. In the absence of LIN28A, TUT7 and TUT4 monouridylate group II pre-miRNAs, which includes most of pre-let7 members, that shapes an optimal 3' end overhang for efficient processing. Add oligo-U tails to truncated pre-miRNAS with a 5' overhang which may promote rapid degradation of non-functional pre-miRNA species. Does not play a role in replication-dependent histone mRNA degradation. Due to functional redundancy between TUT4 and TUT7, the identification of the specific role of each of these proteins is difficult. TUT4 and TUT7 restrict retrotransposition of long interspersed element-1 (LINE-1) in cooperation with MOV10 counteracting the RNA chaperonne activity of L1RE1. TUT7 uridylates LINE-1 mRNAs in the cytoplasm which inhibits initiation of reverse transcription once in the nucleus, whereas uridylation by TUT4 destabilizes mRNAs in cytoplasmic ribonucleoprotein granules. The polypeptide is Terminal uridylyltransferase 7 (Homo sapiens (Human)).